Reading from the N-terminus, the 399-residue chain is S-adenosylmethionine synthase (399 aa).

Position 17 (His-17) interacts with ATP. Asp-19 is a binding site for Mg(2+). Glu-45 contributes to the K(+) binding site. Residues Glu-58 and Gln-101 each coordinate L-methionine. Residues 101–111 (QSPDIAQGVDE) form a flexible loop region. Residues 177-179 (DAK), 244-245 (RF), Asp-253, 259-260 (RK), Ala-276, and Lys-280 contribute to the ATP site. Asp-253 contacts L-methionine. Lys-284 serves as a coordination point for L-methionine.

The protein belongs to the AdoMet synthase family. Homotetramer; dimer of dimers. Requires Mg(2+) as cofactor. K(+) is required as a cofactor.

It is found in the cytoplasm. It carries out the reaction L-methionine + ATP + H2O = S-adenosyl-L-methionine + phosphate + diphosphate. Its pathway is amino-acid biosynthesis; S-adenosyl-L-methionine biosynthesis; S-adenosyl-L-methionine from L-methionine: step 1/1. In terms of biological role, catalyzes the formation of S-adenosylmethionine (AdoMet) from methionine and ATP. The overall synthetic reaction is composed of two sequential steps, AdoMet formation and the subsequent tripolyphosphate hydrolysis which occurs prior to release of AdoMet from the enzyme. The polypeptide is S-adenosylmethionine synthase (Listeria welshimeri serovar 6b (strain ATCC 35897 / DSM 20650 / CCUG 15529 / CIP 8149 / NCTC 11857 / SLCC 5334 / V8)).